Consider the following 378-residue polypeptide: MNKPLRNSHPLFKIANNALVDLPAPINISSWWNFGSLLGLCLIIQILTGLFLAMHYTADINLAFYSVNHICRDVNYGWLLRTLHANGASFFFICIYLHVGRGIYYGSYMFTPTWLIGVIILFLVMGTAFMGYVLPWGQMSFWGATVITNLLSAIPYLGMDLVQWLWGGFAVDNATLTRFFTFHFILPFIVLAMTMIHLLFLHQTGSNNPIGLNSNIDKIPFHPYFTFKDIVGFIVMIFILISLVLISPNLLGDPDNFIPANPLVTPAHIQPEWYFLFAYAILRSIPNKLGGVIALVLSIAILMILPFYNLSKFRGIQFYPINQVMFWSMLVTVILLTWIGARPVEEPYVLIGQILTVVYFLYYLVNPLITKWWDNLLN.

The next 4 membrane-spanning stretches (helical) occupy residues 34-54, 78-99, 114-134, and 179-199; these read FGSL…FLAM, WLLR…YLHV, WLIG…GYVL, and FFTF…IHLL. Heme b contacts are provided by His-84 and His-98. 2 residues coordinate heme b: His-183 and His-197. His-202 serves as a coordination point for a ubiquinone. 4 consecutive transmembrane segments (helical) span residues 227–247, 289–309, 321–341, and 348–368; these read FKDI…VLIS, LGGV…PFYN, INQV…WIGA, and YVLI…VNPL.

Belongs to the cytochrome b family. In terms of assembly, the main subunits of complex b-c1 are: cytochrome b, cytochrome c1 and the Rieske protein. Heme b is required as a cofactor.

Its subcellular location is the mitochondrion inner membrane. Functionally, component of the ubiquinol-cytochrome c reductase complex (complex III or cytochrome b-c1 complex) that is part of the mitochondrial respiratory chain. The b-c1 complex mediates electron transfer from ubiquinol to cytochrome c. Contributes to the generation of a proton gradient across the mitochondrial membrane that is then used for ATP synthesis. The chain is Cytochrome b (mt:Cyt-b) from Drosophila simulans (Fruit fly).